A 239-amino-acid chain; its full sequence is MVKYNRIVLKISGEALAGEAGFGIKPPVIATIAKQIKEVHELGVQIAIVCGGGNIWRGETGAEMGMERAQADYMGMLATVMNALALQDNLESQGVPTRVQTSIEMRQIAEPYIRRKAIRHLEKGRVVIFAGGTGNPYFSTDTTAALRAAEIGADVILMAKNNVDGVYSADPNKDTHAVKYESLTHMDIINKDLKVMDSTASTLSMDNDIDLVVFNLNEPGNIKRVVEGQKIGTTIEGRS.

10 to 13 (KISG) is an ATP binding site. The interval 18-23 (GEAGFG) is involved in allosteric activation by GTP. Gly52 serves as a coordination point for UMP. ATP-binding residues include Gly53 and Arg57. UMP-binding positions include Asp72 and 133 to 140 (TGNPYFST). Positions 161, 167, and 170 each coordinate ATP.

The protein belongs to the UMP kinase family. In terms of assembly, homohexamer.

It localises to the cytoplasm. The enzyme catalyses UMP + ATP = UDP + ADP. It functions in the pathway pyrimidine metabolism; CTP biosynthesis via de novo pathway; UDP from UMP (UMPK route): step 1/1. With respect to regulation, allosterically activated by GTP. Inhibited by UTP. Catalyzes the reversible phosphorylation of UMP to UDP. The polypeptide is Uridylate kinase (Lacticaseibacillus paracasei (strain ATCC 334 / BCRC 17002 / CCUG 31169 / CIP 107868 / KCTC 3260 / NRRL B-441) (Lactobacillus paracasei)).